A 244-amino-acid polypeptide reads, in one-letter code: 2-C-methyl-D-erythritol 4-phosphate cytidylyltransferase (244 aa).

Belongs to the IspD/TarI cytidylyltransferase family. IspD subfamily.

It carries out the reaction 2-C-methyl-D-erythritol 4-phosphate + CTP + H(+) = 4-CDP-2-C-methyl-D-erythritol + diphosphate. The protein operates within isoprenoid biosynthesis; isopentenyl diphosphate biosynthesis via DXP pathway; isopentenyl diphosphate from 1-deoxy-D-xylulose 5-phosphate: step 2/6. Its function is as follows. Catalyzes the formation of 4-diphosphocytidyl-2-C-methyl-D-erythritol from CTP and 2-C-methyl-D-erythritol 4-phosphate (MEP). In Solibacter usitatus (strain Ellin6076), this protein is 2-C-methyl-D-erythritol 4-phosphate cytidylyltransferase.